The sequence spans 103 residues: Large ribosomal subunit protein P1 (103 aa).

A disordered region spans residues 66–103 (PAAGAPAAGAAGGAVEEKKEEKKAESEDESDDDMGLFD). Over residues 80-90 (VEEKKEEKKAE) the composition is skewed to basic and acidic residues. Positions 91-103 (SEDESDDDMGLFD) are enriched in acidic residues.

It belongs to the eukaryotic ribosomal protein P1/P2 family. P1 and P2 exist as dimers at the large ribosomal subunit.

In terms of biological role, plays an important role in the elongation step of protein synthesis. This chain is Large ribosomal subunit protein P1, found in Polyorchis penicillatus (Hydromedusa).